The sequence spans 131 residues: M-zodatoxin-Lt8o (131 aa).

Positions 1-20 (MKYFVVALALVAAFACIAES) are cleaved as a signal peptide. Positions 21–60 (KPAESEHELAEVEEENELADLEDAVWLEHLADLSDLEEAR) are excised as a propeptide.

It belongs to the cationic peptide 06 (cytoinsectotoxin) family. As to expression, expressed by the venom gland.

The protein localises to the secreted. In terms of biological role, insecticidal, cytolytic and antimicrobial peptide. Forms voltage-dependent, ion-permeable channels in membranes. At high concentration causes cell membrane lysis. The sequence is that of M-zodatoxin-Lt8o (cit 1-14) from Lachesana tarabaevi (Spider).